The following is a 613-amino-acid chain: WD40 repeat-containing protein HOS15 (613 aa).

The LisH domain occupies 5-37 (TSVELNFLVFRYLQESGFTHAAFTLGYEAGINK). 2 disordered regions span residues 101–174 (KKRK…REKM) and 193–214 (EIER…KQLG). WD repeat units follow at residues 263 to 302 (GHTS…FKAV), 322 to 362 (EKSK…STLS), 363 to 402 (KHKG…WKQQ), 405 to 443 (FHSG…PAKT), 446 to 485 (GHQG…FVHD), 488 to 536 (EHTK…MLCS), 539 to 580 (GHRE…KTYT), and 582 to 613 (NGGI…DFRM).

Its subcellular location is the nucleus. Functionally, acts as a repressor of cold stress-regulated gene expression. Interacts specifically with and promotes deacetylation of histone H4. Plays a role in gene regulation for plant acclimation and tolerance to cold stress. This Arabidopsis thaliana (Mouse-ear cress) protein is WD40 repeat-containing protein HOS15.